The primary structure comprises 643 residues: MKMASQRFCLRWNNHQSNLLSVFDQLLHAETFTDVTLAVEGQHLKAHKMVLSACSPYFNTLFVSHPEKHPIVILKDVPYSDMKSLLDFMYRGEVSVDQERLTAFLRVAESLRIKGLTEVNDDKPSPAAAAAGAGATGSESTATTPQLQRIQPYLVPQRNRSQAGGLLASAANAGNTPTLPVQPSLLSSALMPKRKRGRPRKLSGSSNGTGNDYDDFDRENMMNDSSDLGNGKMCNESYSGNDDGSDDNQPNAGHTDDLNESRDSLPSKRSKNSKDHRVVSHHEDNSTSDGNDSDGEGLDTSYMEPQLMLDEYDEPVEFKYNPLTDNSSPTQDHTDGSHLNEQARQQAFLIAAQRKHQVETAAAAAASGIKLNIIGMAAGGAQVKSMVSIPKLTPIGKVNAASTPLVSPAGSFSTATVKPRVQKRPKLGKQNGDVKPAVFSSQEYLDIYNSNDGFKLKAAGLSGSTPNLSAGLGTPSVKTKLNLSSNVGEGEAEGSVRDYCTKEGEHTYRCKVCSRVYTHISNFCRHYVTSHKRNVKVYPCPFCFKEFTRKDNMTAHVKIIHKIENPSTALATVAAANLAGQPLGVSGASTPPPPDLSGQNSNQSLPATSNALSTSSSSSTSSSSGSLGPLTTSAPPAPAAAAQ.

The region spanning 33–98 (TDVTLAVEGQ…MYRGEVSVDQ (66 aa)) is the BTB domain. 2 disordered regions span residues 118 to 148 (EVNDDKPSPAAAAAGAGATGSESTATTPQLQ) and 171 to 300 (ANAG…GLDT). Residue lysine 123 forms a Glycyl lysine isopeptide (Lys-Gly) (interchain with G-Cter in ubiquitin) linkage. Positions 125-145 (SPAAAAAGAGATGSESTATTP) are enriched in low complexity. Residues 176–187 (TPTLPVQPSLLS) show a composition bias toward polar residues. Over residues 192-201 (PKRKRGRPRK) the composition is skewed to basic residues. Residue lysine 201 forms a Glycyl lysine isopeptide (Lys-Gly) (interchain with G-Cter in ubiquitin) linkage. Residues 254 to 285 (HTDDLNESRDSLPSKRSKNSKDHRVVSHHEDN) show a composition bias toward basic and acidic residues. Glycyl lysine isopeptide (Lys-Gly) (interchain with G-Cter in ubiquitin) cross-links involve residues lysine 355, lysine 397, lysine 418, lysine 457, lysine 478, and lysine 480. C2H2-type zinc fingers lie at residues 508 to 531 (YRCKVCSRVYTHISNFCRHYVTSH) and 538 to 561 (YPCPFCFKEFTRKDNMTAHVKIIH). Lysine 545 participates in a covalent cross-link: Glycyl lysine isopeptide (Lys-Gly) (interchain with G-Cter in ubiquitin). Residues 584–643 (GVSGASTPPPPDLSGQNSNQSLPATSNALSTSSSSSTSSSSGSLGPLTTSAPPAPAAAAQ) form a disordered region. Low complexity predominate over residues 604–643 (SLPATSNALSTSSSSSTSSSSGSLGPLTTSAPPAPAAAAQ).

Can form homodimers. Interacts with Trl in vivo via the BTB domain. Interacts with phyl. Interacts with Usp47. In terms of processing, polyubiquitinated by sina. Polyubiquitin linkage is mainly through 'Lys-48', but linkage through 'Lys-63' also occurs. Deubiquitination by Usp47 leads to its stabilization.

It is found in the nucleus. Its function is as follows. Binds to a number of sites in the transcriptional regulatory region of ftz. Isoform beta is required to repress inappropriate segmentation gene transcription and repress genes incompatible with development of photoreceptor cell fates. Probable repressor of the transcription of the segmentation genes ftz, eve, h, odd, run, and en. Inhibits Trl-dependent activation of eve. May bind to the region AGGGC/TGG. Degradation of ttk is directed by binding of sinah or sina, via the adapter molecule phyl which binds to the BTB domain of ttk. A second method of degradation exists that is phyl-independent, this is mediated by recognition of motifs in the C-terminus of ttk. The chain is Protein tramtrack, beta isoform (ttk) from Drosophila melanogaster (Fruit fly).